Consider the following 362-residue polypeptide: Alpha-glucoside transport ATP-binding protein AglK (362 aa).

The ABC transporter domain maps to 4-235 (LLLKDIRKSY…PANLFVARFI (232 aa)). 36-43 (GPSGCGKS) serves as a coordination point for ATP.

It belongs to the ABC transporter superfamily.

The protein localises to the cell inner membrane. Part of the binding-protein-dependent transport system for alpha-glucosides such as sucrose, maltose and trehalose. Probably responsible for energy coupling to the transport system. The protein is Alpha-glucoside transport ATP-binding protein AglK (aglK) of Rhizobium meliloti (strain 1021) (Ensifer meliloti).